A 260-amino-acid polypeptide reads, in one-letter code: Dehydrin ERD10 (260 aa).

Disordered stretches follow at residues 1–187, 197–216, and 240–260; these read MAEE…EEEK, KLPG…TTPL, and KLPG…KVSD. N-acetylalanine is present on Ala2. A compositionally biased stretch (basic and acidic residues) spans 26 to 44; the sequence is EIKERGMFDFLKKKEEVKP. Ser61 carries the post-translational modification Phosphoserine. 5 stretches are compositionally biased toward basic and acidic residues: residues 67-102, 130-140, 148-162, 176-187, and 197-207; these read VAKH…DKLH, IVEGDHVKTVE, DRIK…KPGG, SVEDHKPEEEEK, and KLPGHSKKPED. 2 consecutive repeat copies span residues 184 to 204 and 227 to 247. The segment at 184-247 is 2 X 21 AA repeats, Lys-rich; the sequence is EEEKKGFMDK…KEKLPGYHAK (64 aa).

Belongs to the plant dehydrin family. As to expression, in stems, cauline leaves, roots and flowers. Low levels found in maturing seeds. Absent in dry seeds.

The chain is Dehydrin ERD10 (ERD10) from Arabidopsis thaliana (Mouse-ear cress).